A 672-amino-acid chain; its full sequence is Iron-phytosiderophore transporter YSL15 (672 aa).

Basic and acidic residues predominate over residues 1–11; that stretch reads MEHADADRTRV. The interval 1–27 is disordered; it reads MEHADADRTRVAPEIGSLHDEDAEADP. The next 14 membrane-spanning stretches (helical) occupy residues 47 to 67, 70 to 90, 115 to 135, 158 to 178, 218 to 238, 279 to 299, 325 to 345, 390 to 410, 418 to 438, 450 to 470, 504 to 524, 556 to 576, 602 to 622, and 630 to 650; these read GVVA…KIAL, GLVP…LRGW, CAVA…LLGL, GIGW…LSLI, LHGF…QWFY, LVNL…WPLI, FLCI…VTGV, MAYS…PIMF, VIIA…GAGL, IALF…AGLV, VGEL…FMLF, ISAL…FAVL, FLVG…LFAW, and AAFM…IWTF.

It belongs to the YSL (TC 2.A.67.2) family. As to expression, expressed in root phloem and at low levels in the shoot companion cells.

The protein resides in the cell membrane. In terms of biological role, involved in Fe(3+) uptake from the rhizosphere and phloem transport of iron. Plays an important role in iron homeostasis during the early stages of growth. Transports Fe(3+)-phytosiderophore, but not Fe(3+)- or Fe(2+)-nicotianamine. May not transport other chelated metals. The sequence is that of Iron-phytosiderophore transporter YSL15 (YSL15) from Oryza sativa subsp. japonica (Rice).